The sequence spans 436 residues: UDP-N-acetylglucosamine 1-carboxyvinyltransferase 1 (436 aa).

22 to 23 lines the phosphoenolpyruvate pocket; it reads KN. Arginine 93 is a binding site for UDP-N-acetyl-alpha-D-glucosamine. Cysteine 117 functions as the Proton donor in the catalytic mechanism. Cysteine 117 carries the post-translational modification 2-(S-cysteinyl)pyruvic acid O-phosphothioketal. UDP-N-acetyl-alpha-D-glucosamine is bound by residues 122-126, aspartate 306, and valine 328; that span reads RPIDQ.

It belongs to the EPSP synthase family. MurA subfamily.

It is found in the cytoplasm. It catalyses the reaction phosphoenolpyruvate + UDP-N-acetyl-alpha-D-glucosamine = UDP-N-acetyl-3-O-(1-carboxyvinyl)-alpha-D-glucosamine + phosphate. It participates in cell wall biogenesis; peptidoglycan biosynthesis. Its function is as follows. Cell wall formation. Adds enolpyruvyl to UDP-N-acetylglucosamine. This Bacillus licheniformis (strain ATCC 14580 / DSM 13 / JCM 2505 / CCUG 7422 / NBRC 12200 / NCIMB 9375 / NCTC 10341 / NRRL NRS-1264 / Gibson 46) protein is UDP-N-acetylglucosamine 1-carboxyvinyltransferase 1.